The primary structure comprises 307 residues: UDP-3-O-acyl-N-acetylglucosamine deacetylase (307 aa).

Residues H78, H241, and D245 each coordinate Zn(2+). H268 serves as the catalytic Proton donor.

The protein belongs to the LpxC family. Requires Zn(2+) as cofactor.

It carries out the reaction a UDP-3-O-[(3R)-3-hydroxyacyl]-N-acetyl-alpha-D-glucosamine + H2O = a UDP-3-O-[(3R)-3-hydroxyacyl]-alpha-D-glucosamine + acetate. It participates in glycolipid biosynthesis; lipid IV(A) biosynthesis; lipid IV(A) from (3R)-3-hydroxytetradecanoyl-[acyl-carrier-protein] and UDP-N-acetyl-alpha-D-glucosamine: step 2/6. Its function is as follows. Catalyzes the hydrolysis of UDP-3-O-myristoyl-N-acetylglucosamine to form UDP-3-O-myristoylglucosamine and acetate, the committed step in lipid A biosynthesis. In Bordetella bronchiseptica (strain ATCC BAA-588 / NCTC 13252 / RB50) (Alcaligenes bronchisepticus), this protein is UDP-3-O-acyl-N-acetylglucosamine deacetylase.